The following is a 794-amino-acid chain: Signal transducer and activator of transcription 5A (794 aa).

At Y90 the chain carries Phosphotyrosine. A phosphoserine mark is found at S128 and S193. One can recognise an SH2 domain in the interval 589–686; the sequence is WNDGAILGFV…EVFSKYYTPV (98 aa). Y682 is modified (phosphotyrosine). Y694 carries the phosphotyrosine; by JAK2 modification. The interval 773 to 794 is disordered; it reads DSLDSRLSPPAGLFTSARGSLS. Position 780 is a phosphoserine (S780).

This sequence belongs to the transcription factor STAT family. Forms a homodimer or a heterodimer with a related family member. Binds NR3C1. Interacts with NCOA1 and SOCS7. Interacts with ERBB4. Interacts with EBF4. Interacts with CD69. Post-translationally, tyrosine phosphorylated in response to KITLG/SCF, IL2, IL3, IL7, IL15, CSF2/GMCSF, GH1, PRL, EPO and THPO. Activated KIT promotes phosphorylation on tyrosine residues and subsequent translocation to the nucleus. Tyrosine phosphorylated in response to constitutively activated FGFR1, FGFR2, FGFR3 and FGFR4. Tyrosine phosphorylation is required for DNA-binding activity and dimerization. Serine phosphorylation is also required for maximal transcriptional activity. Tyrosine phosphorylated in response to signaling via activated FLT3; wild-type FLT3 results in much weaker phosphorylation than constitutively activated mutant FLT3. Alternatively, can be phosphorylated by JAK2 at Tyr-694. ISGylated.

The protein localises to the cytoplasm. The protein resides in the nucleus. Functionally, carries out a dual function: signal transduction and activation of transcription. Mediates cellular responses to the cytokine KITLG/SCF and other growth factors. Mediates cellular responses to ERBB4. May mediate cellular responses to activated FGFR1, FGFR2, FGFR3 and FGFR4. Binds to the GAS element and activates PRL-induced transcription. Regulates the expression of milk proteins during lactation. In Homo sapiens (Human), this protein is Signal transducer and activator of transcription 5A (STAT5A).